We begin with the raw amino-acid sequence, 296 residues long: UDP-N-acetylenolpyruvoylglucosamine reductase (296 aa).

Residues 26-191 form the FAD-binding PCMH-type domain; sequence RIGGPANYFK…LSATFRLSKS (166 aa). Arg170 is an active-site residue. The Proton donor role is filled by Cys218. Residue Glu287 is part of the active site.

Belongs to the MurB family. The cofactor is FAD.

The protein localises to the cytoplasm. It catalyses the reaction UDP-N-acetyl-alpha-D-muramate + NADP(+) = UDP-N-acetyl-3-O-(1-carboxyvinyl)-alpha-D-glucosamine + NADPH + H(+). Its pathway is cell wall biogenesis; peptidoglycan biosynthesis. In terms of biological role, cell wall formation. In Chlamydia felis (strain Fe/C-56) (Chlamydophila felis), this protein is UDP-N-acetylenolpyruvoylglucosamine reductase.